We begin with the raw amino-acid sequence, 126 residues long: Fluoride-specific ion channel FluC (126 aa).

Helical transmembrane passes span 6–26, 32–52, 68–90, and 102–122; these read VLLV…VALA, TGFP…IGFI, LLLT…ETGG, and LYVA…TLLA. Na(+) contacts are provided by Gly-76 and Thr-79.

This sequence belongs to the fluoride channel Fluc/FEX (TC 1.A.43) family.

The protein resides in the cell inner membrane. The catalysed reaction is fluoride(in) = fluoride(out). Na(+) is not transported, but it plays an essential structural role and its presence is essential for fluoride channel function. In terms of biological role, fluoride-specific ion channel. Important for reducing fluoride concentration in the cell, thus reducing its toxicity. In Chlorobaculum tepidum (strain ATCC 49652 / DSM 12025 / NBRC 103806 / TLS) (Chlorobium tepidum), this protein is Fluoride-specific ion channel FluC.